The sequence spans 522 residues: uncharacterized protein (522 aa).

Low complexity predominate over residues 1-11 (MSSITSRVSSR). The tract at residues 1–20 (MSSITSRVSSRSSHELTEKK) is disordered. The next 12 membrane-spanning stretches (helical) occupy residues 69-89 (VLWKIDLVMMPVMCITYMIQY), 116-136 (SMTTLFYAGYLVAQYPAAILM), 141-161 (LSYFIFCNVFLWSAMVCLMAA), 173-193 (FLAGIFEASITPAFINITAMW), 204-224 (LCWYAFNGIAQIIGSILSYGL), 236-256 (YVFIVIGLMSLGWGVVFVFIP), 303-323 (VIMITLFTGVCMITNGIGVFS), 338-358 (AVLNMPLGAIEVAAMFISGVL), 367-387 (LLIGVFMNCLTLAGCLMIWKI), 396-416 (LVGVWFTMWVPASSALLLSLI), 428-448 (VTSATVFVFYSVGNIVSPQLF), and 462-482 (AMIVSLCIIIAIAFVLTGYYI).

The protein belongs to the major facilitator superfamily. Allantoate permease family.

The protein localises to the endoplasmic reticulum. Its subcellular location is the membrane. This is an uncharacterized protein from Schizosaccharomyces pombe (strain 972 / ATCC 24843) (Fission yeast).